Consider the following 711-residue polypeptide: Early transcription factor 82 kDa subunit (711 aa).

This sequence belongs to the poxviridae VETF large subunit family. Heterodimer of a 70 kDa and a 82 kDa subunit. Part of the early transcription complex composed of ETF, RAP94, and the DNA-directed RNA polymerase.

Its function is as follows. Acts with RNA polymerase to initiate transcription from early gene promoters. Is recruited by the RPO-associated protein of 94 kDa (RAP94) to form the early transcription complex, which also contains the core RNA polymerase. ETF heterodimer binds to early gene promoters. This is Early transcription factor 82 kDa subunit (VETFL) from Oryctolagus cuniculus (Rabbit).